The chain runs to 1088 residues: uncharacterized protein (1088 aa).

A Phosphoserine modification is found at Ser299. A disordered region spans residues 954 to 980; that stretch reads PRSSVATTASTESSEQGPKMKRMARRK. Residues 956–968 show a composition bias toward low complexity; sequence SSVATTASTESSE. Ser984 bears the Phosphoserine mark. Thr1013 carries the phosphothreonine modification. A disordered region spans residues 1063–1088; sequence MKVTDKAKDEDIDPMDPMSPLNKDVS. Residue Ser1081 is modified to Phosphoserine.

This is an uncharacterized protein from Saccharomyces cerevisiae (strain ATCC 204508 / S288c) (Baker's yeast).